We begin with the raw amino-acid sequence, 133 residues long: uncharacterized protein (133 aa).

The next 2 helical transmembrane spans lie at 13-33 and 73-93; these read FLLSVVGSGNSLSILNGLFLS and FGNPLVTSLNIMYSLFYLLLL.

The protein localises to the membrane. This is an uncharacterized protein from Saccharomyces cerevisiae (strain ATCC 204508 / S288c) (Baker's yeast).